Reading from the N-terminus, the 392-residue chain is Histidinol-phosphate aminotransferase (392 aa).

A disordered region spans residues 1–24 (MSAVLKDPIPAPGRPESTRPEPRP). Residue lysine 236 is modified to N6-(pyridoxal phosphate)lysine.

Belongs to the class-II pyridoxal-phosphate-dependent aminotransferase family. Histidinol-phosphate aminotransferase subfamily. As to quaternary structure, homodimer. It depends on pyridoxal 5'-phosphate as a cofactor.

It catalyses the reaction L-histidinol phosphate + 2-oxoglutarate = 3-(imidazol-4-yl)-2-oxopropyl phosphate + L-glutamate. It participates in amino-acid biosynthesis; L-histidine biosynthesis; L-histidine from 5-phospho-alpha-D-ribose 1-diphosphate: step 7/9. In Xanthobacter autotrophicus (strain ATCC BAA-1158 / Py2), this protein is Histidinol-phosphate aminotransferase.